The chain runs to 66 residues: MRIFSLIVAGLVLLIQLHPAKGTLYRRFLCKKMKGRCETACLSFEKKIGTCRADLTPLCCKEKKKH.

The signal sequence occupies residues 1 to 22; the sequence is MRIFSLIVAGLVLLIQLHPAKG. Cystine bridges form between Cys30-Cys59, Cys37-Cys51, and Cys41-Cys60.

Belongs to the beta-defensin family.

It localises to the secreted. Its function is as follows. Has antibacterial activity. This chain is Beta-defensin 13 (Defb13), found in Rattus norvegicus (Rat).